An 877-amino-acid chain; its full sequence is Leucine--tRNA ligase (877 aa).

A 'HIGH' region motif is present at residues 43-53; sequence PYPSGRIHMGH. A 'KMSKS' region motif is present at residues 628–632; sequence KMSKS. Residue Lys-631 participates in ATP binding.

Belongs to the class-I aminoacyl-tRNA synthetase family.

The protein resides in the cytoplasm. The enzyme catalyses tRNA(Leu) + L-leucine + ATP = L-leucyl-tRNA(Leu) + AMP + diphosphate. This is Leucine--tRNA ligase from Brucella abortus (strain S19).